Consider the following 376-residue polypeptide: Protein XRP2 (376 aa).

The interval 1-55 (MGCFFSKKSRRKSPKKDAALPTGDESATGNDLAETNNTALGSNSNQEAPKQYSWD) is disordered. Gly2 is lipidated: N-myristoyl glycine. A lipid anchor (S-palmitoyl cysteine) is attached at Cys3. The span at 25–48 (ESATGNDLAETNNTALGSNSNQEA) shows a compositional bias: polar residues. Residues 49–204 (PKQYSWDKRE…NWSNIHDFTP (156 aa)) enclose the C-CAP/cofactor C-like domain. Residues 123-124 (GS) and 140-143 (QQFR) each bind GTP.

It belongs to the TBCC family. Post-translationally, myristoylated on Gly-2; which may be required for membrane targeting. In terms of processing, palmitoylated on Cys-3; which may be required for plasma membrane targeting. In terms of tissue distribution, in the retina, detected in both rod and cone photoreceptors (at protein level). Has strongest expression in the retinal outer nuclear layer (ONL) and weaker expression in the outer plexiform layer (OPL) and inner plexiform layer (IPL) (at protein level). Expressed in all tissues tested.

Its subcellular location is the cell membrane. The protein localises to the cell projection. It is found in the cilium. Acts as a GTPase-activating protein (GAP) involved in trafficking between the Golgi and the ciliary membrane. Acts as a GTPase-activating protein (GAP) for tubulin in concert with tubulin-specific chaperone C, but does not enhance tubulin heterodimerization. In the retina, required for maintenance of rod and cone photoreceptor cells. May have a role in normal retinal localization of the transducins GNB1 and GNAT1, and the rhodopsin kinase GRK1. The polypeptide is Protein XRP2 (Danio rerio (Zebrafish)).